The sequence spans 364 residues: Chorismate synthase (364 aa).

The NADP(+) site is built by Arg48 and Arg54. Residues 125–127 (RSS), 238–239 (NA), Gly278, 293–297 (KPTSS), and Arg319 each bind FMN.

The protein belongs to the chorismate synthase family. Homotetramer. Requires FMNH2 as cofactor.

The catalysed reaction is 5-O-(1-carboxyvinyl)-3-phosphoshikimate = chorismate + phosphate. It participates in metabolic intermediate biosynthesis; chorismate biosynthesis; chorismate from D-erythrose 4-phosphate and phosphoenolpyruvate: step 7/7. Catalyzes the anti-1,4-elimination of the C-3 phosphate and the C-6 proR hydrogen from 5-enolpyruvylshikimate-3-phosphate (EPSP) to yield chorismate, which is the branch point compound that serves as the starting substrate for the three terminal pathways of aromatic amino acid biosynthesis. This reaction introduces a second double bond into the aromatic ring system. In Shewanella woodyi (strain ATCC 51908 / MS32), this protein is Chorismate synthase.